Here is a 426-residue protein sequence, read N- to C-terminus: Pyrophosphate--fructose 6-phosphate 1-phosphotransferase 1 (426 aa).

A diphosphate-binding site is contributed by Gly15. Asp114 lines the Mg(2+) pocket. Residues 140-142 (TID), 186-188 (MGR), Glu247, and 308-311 (YELR) contribute to the substrate site. Asp142 functions as the Proton acceptor in the catalytic mechanism.

The protein belongs to the phosphofructokinase type A (PFKA) family. PPi-dependent PFK group II subfamily. Clade 'Short' sub-subfamily. As to quaternary structure, homotetramer. The cofactor is Mg(2+).

The protein resides in the cytoplasm. The catalysed reaction is beta-D-fructose 6-phosphate + diphosphate = beta-D-fructose 1,6-bisphosphate + phosphate + H(+). The protein operates within carbohydrate degradation; glycolysis; D-glyceraldehyde 3-phosphate and glycerone phosphate from D-glucose: step 3/4. With respect to regulation, non-allosteric. Catalyzes the phosphorylation of D-fructose 6-phosphate, the first committing step of glycolysis. Uses inorganic phosphate (PPi) as phosphoryl donor instead of ATP like common ATP-dependent phosphofructokinases (ATP-PFKs), which renders the reaction reversible, and can thus function both in glycolysis and gluconeogenesis. Consistently, PPi-PFK can replace the enzymes of both the forward (ATP-PFK) and reverse (fructose-bisphosphatase (FBPase)) reactions. The chain is Pyrophosphate--fructose 6-phosphate 1-phosphotransferase 1 (Pfk1) from Trichomonas vaginalis (strain ATCC PRA-98 / G3).